Consider the following 419-residue polypeptide: 5-methylthioadenosine/S-adenosylhomocysteine deaminase (419 aa).

Positions 58 and 60 each coordinate Zn(2+). Residues Glu87 and His179 each coordinate substrate. His206 is a binding site for Zn(2+). Substrate is bound by residues Glu209 and Asp294. Position 294 (Asp294) interacts with Zn(2+).

Belongs to the metallo-dependent hydrolases superfamily. MTA/SAH deaminase family. Zn(2+) is required as a cofactor.

It carries out the reaction S-adenosyl-L-homocysteine + H2O + H(+) = S-inosyl-L-homocysteine + NH4(+). The enzyme catalyses S-methyl-5'-thioadenosine + H2O + H(+) = S-methyl-5'-thioinosine + NH4(+). In terms of biological role, catalyzes the deamination of 5-methylthioadenosine and S-adenosyl-L-homocysteine into 5-methylthioinosine and S-inosyl-L-homocysteine, respectively. Is also able to deaminate adenosine. The chain is 5-methylthioadenosine/S-adenosylhomocysteine deaminase from Pyrococcus furiosus (strain ATCC 43587 / DSM 3638 / JCM 8422 / Vc1).